Consider the following 475-residue polypeptide: Maintenance of mitochondrial morphology protein 1 (475 aa).

Residues 1-14 (MSETFSPNLTFTEG) are Lumenal-facing. The helical transmembrane segment at 15–35 (FVLGQASFLIILLLFIRYVVF) threads the bilayer. Topologically, residues 36 to 475 (SPSEQIDHEG…VTPGQVGTSR (440 aa)) are cytoplasmic. Residues 80–278 (PAESSDWVNV…HPNHISLALP (199 aa)) form the SMP-LTD domain. 2 disordered regions span residues 321–381 (NPVE…GQPQ) and 394–475 (SYPH…GTSR). Over residues 341-351 (PPTPLVQPPGT) the composition is skewed to pro residues. 2 stretches are compositionally biased toward polar residues: residues 353-380 (PTLS…QGQP) and 394-403 (SYPHYNTYTL). Residues 442 to 464 (STTSSLTPSQSQSQFRFRGQFAS) show a composition bias toward low complexity.

This sequence belongs to the MMM1 family. Homodimer. Component of the ER-mitochondria encounter structure (ERMES) or MDM complex, composed of MMM1, MDM10, MDM12 and MDM34. An MMM1 homodimer associates with one molecule of MDM12 on each side in a pairwise head-to-tail manner, and the SMP-LTD domains of MMM1 and MDM12 generate a continuous hydrophobic tunnel for phospholipid trafficking.

It is found in the endoplasmic reticulum membrane. Component of the ERMES/MDM complex, which serves as a molecular tether to connect the endoplasmic reticulum (ER) and mitochondria. Components of this complex are involved in the control of mitochondrial shape and protein biogenesis, and function in nonvesicular lipid trafficking between the ER and mitochondria. The MDM12-MMM1 subcomplex functions in the major beta-barrel assembly pathway that is responsible for biogenesis of all outer membrane beta-barrel proteins, and acts in a late step after the SAM complex. The MDM10-MDM12-MMM1 subcomplex further acts in the TOM40-specific pathway after the action of the MDM12-MMM1 complex. Essential for establishing and maintaining the structure of mitochondria and maintenance of mtDNA nucleoids. The chain is Maintenance of mitochondrial morphology protein 1 from Cryptococcus neoformans var. neoformans serotype D (strain B-3501A) (Filobasidiella neoformans).